Here is a 243-residue protein sequence, read N- to C-terminus: Phosphate-specific transport system accessory protein PhoU (243 aa).

It belongs to the PhoU family. In terms of assembly, homodimer.

It is found in the cytoplasm. Part of the phosphate (Pho) regulon, which plays a key role in phosphate homeostasis. Encoded together with proteins of the phosphate-specific transport (Pst) system in the polycistronic pstSCAB-phoU operon. PhoU is essential for the repression of the Pho regulon at high phosphate conditions. In this role, it may bind, possibly as a chaperone, to PhoR, PhoB or a PhoR-PhoB complex to promote dephosphorylation of phospho-PhoB, or inhibit formation of the PhoR-PhoB transitory complex. This chain is Phosphate-specific transport system accessory protein PhoU, found in Serratia marcescens.